The following is a 149-amino-acid chain: Arginine repressor (149 aa).

This sequence belongs to the ArgR family.

The protein resides in the cytoplasm. Its pathway is amino-acid biosynthesis; L-arginine biosynthesis [regulation]. Functionally, regulates arginine biosynthesis genes. In Exiguobacterium sp. (strain ATCC BAA-1283 / AT1b), this protein is Arginine repressor.